Consider the following 71-residue polypeptide: Lysis protein (71 aa).

The interval 1-24 (MQQPSQPTRESTKKPVPFQHEEYP) is disordered. Residues 34–56 (LYVLICLAIFLSKFTNQLLASLL) traverse the membrane as a helical segment.

The protein belongs to the Leviviricetes lysis protein family.

It localises to the host cell inner membrane. It is found in the host cell outer membrane. Functionally, induces the formation of specific membrane adhesion sites between the inner and outer membranes, apparently leading to host cell lysis. Lysis may be performed via activation of host murein hydrolases. This Enterobacteria phage fr (Bacteriophage fr) protein is Lysis protein.